The sequence spans 630 residues: tRNA uridine 5-carboxymethylaminomethyl modification enzyme MnmG (630 aa).

13-18 provides a ligand contact to FAD; sequence GGGHAG. 273 to 287 contributes to the NAD(+) binding site; that stretch reads GPRYCPSIEDKIHRF.

It belongs to the MnmG family. In terms of assembly, homodimer. Heterotetramer of two MnmE and two MnmG subunits. FAD serves as cofactor.

It is found in the cytoplasm. Functionally, NAD-binding protein involved in the addition of a carboxymethylaminomethyl (cmnm) group at the wobble position (U34) of certain tRNAs, forming tRNA-cmnm(5)s(2)U34. This is tRNA uridine 5-carboxymethylaminomethyl modification enzyme MnmG from Pseudomonas entomophila (strain L48).